We begin with the raw amino-acid sequence, 104 residues long: UPF0145 protein Hlac_1015 (104 aa).

The protein belongs to the UPF0145 family.

The protein is UPF0145 protein Hlac_1015 of Halorubrum lacusprofundi (strain ATCC 49239 / DSM 5036 / JCM 8891 / ACAM 34).